Consider the following 124-residue polypeptide: Protein MGF 110-4L (124 aa).

A signal peptide spans 1-28 (MLVIFLGILGLLANQVLGLPTQAGGHLR). Residue Asn-64 is glycosylated (N-linked (GlcNAc...) asparagine; by host). Residues 121–124 (KEDL) carry the Prevents secretion from ER motif.

The protein belongs to the asfivirus MGF 110 family.

It is found in the virion. The protein localises to the host endoplasmic reticulum-Golgi intermediate compartment. Functionally, causes the redistribution of lumenal ER protein to an enlarged ERGIC compartment. The polypeptide is Protein MGF 110-4L (African swine fever virus (strain Badajoz 1971 Vero-adapted) (Ba71V)).